The following is a 224-amino-acid chain: 4'-phosphopantetheinyl transferase Sfp (224 aa).

Mg(2+) is bound by residues aspartate 107, glutamate 109, and glutamate 151. Residues 158–189 (GKGLSLPLDSFSVRLHQDGQVSIELPDSHSPC) are peptidyl carrier protein binding.

This sequence belongs to the P-Pant transferase superfamily. Gsp/Sfp/HetI/AcpT family. As to quaternary structure, monomer in solution. Requires Mg(2+) as cofactor.

The enzyme catalyses apo-[ACP] + CoA = holo-[ACP] + adenosine 3',5'-bisphosphate + H(+). Functionally, activates the seven peptidyl carrier protein (PCP) domains of the first three subunits (SrfAA, SrfAB and SrfAC) of surfactin synthetase by transferring the 4'-phosphopantetheinyl moiety of coenzyme A (CoA) to a serine residue. Required for cells of B.subtilis to become producers of the lipopeptide antibiotics surfactin and plipastatin B1. This Bacillus subtilis (strain 168) protein is 4'-phosphopantetheinyl transferase Sfp (sfp).